The sequence spans 271 residues: Cell surface glycoprotein CD200 receptor 2 (271 aa).

Positions 1 to 23 (MSAPRLLISIIIMVSASSSSCMG) are cleaved as a signal peptide. The Extracellular segment spans residues 24-239 (GKQMTQNYST…TSGSPALSLL (216 aa)). 6 N-linked (GlcNAc...) asparagine glycosylation sites follow: asparagine 30, asparagine 39, asparagine 86, asparagine 92, asparagine 189, and asparagine 217. One can recognise an Ig-like V-type domain in the interval 46-132 (MDINAVLCCP…YRGIVVTPDG (87 aa)). Positions 133-221 (NFHRGYHLQV…SHLTGNKSLS (89 aa)) constitute an Ig-like C2-type domain. Cysteines 160 and 209 form a disulfide. The helical transmembrane segment at 240–260 (IILYVKLSLFVVILVTTGFVF) threads the bilayer. Topologically, residues 261 to 271 (FQRINHVRKVL) are cytoplasmic.

Belongs to the CD200R family.

Its subcellular location is the membrane. May be a receptor for the CD200/OX2 cell surface glycoprotein. The polypeptide is Cell surface glycoprotein CD200 receptor 2 (CD200R1L) (Homo sapiens (Human)).